The chain runs to 207 residues: Gap junction epsilon-1 protein (207 aa).

At 1-22 the chain is on the cytoplasmic side; sequence MSLNYIKNFYEGCLRPPTVIGQ. A helical transmembrane segment spans residues 23 to 43; sequence FHTLFFGSVRTFFLGVLGFAV. Residues 44–74 lie on the Extracellular side of the membrane; sequence YGNEALHFSCDPDKRELNLYCYNQFRPITPQ. 2 disulfide bridges follow: Cys-53–Cys-161 and Cys-64–Cys-147. The chain crosses the membrane as a helical span at residues 75 to 95; the sequence is VFWALQLVTVLVPGAVFHLYA. The Cytoplasmic portion of the chain corresponds to 96 to 111; that stretch reads ACKNIDQEEILHRPMS. Residues 112–132 form a helical membrane-spanning segment; it reads TVFYIISVLLRIILEVLAFWL. Topologically, residues 133–175 are extracellular; it reads QSHLFGFLVDPIFMCDVTGLGKILNVSKCMVPEHFEKTIFLSA. A helical membrane pass occupies residues 176 to 196; that stretch reads MYTFTIITILLCIAEIFEILF. At 197–207 the chain is on the cytoplasmic side; the sequence is RRLGYLNQPMT.

Belongs to the connexin family. Beta-type (group I) subfamily. In terms of assembly, a connexon is composed of a hexamer of connexins.

It is found in the cell membrane. Functionally, has significant hemichannel activity. However, has only low-efficiency gap junction activity and probably does not function as a gap junction channel in vivo. In Danio rerio (Zebrafish), this protein is Gap junction epsilon-1 protein.